The following is a 146-amino-acid chain: Hemoglobin subunit beta-2 (146 aa).

In terms of domain architecture, Globin spans 2-146; it reads HWTAEEKQLI…VAHALARRYH (145 aa). Heme b contacts are provided by histidine 63 and histidine 92.

Belongs to the globin family. Heterotetramer of two alpha chains and two beta chains. In terms of tissue distribution, red blood cells.

Involved in oxygen transport from the lung to the various peripheral tissues. This chain is Hemoglobin subunit beta-2, found in Iguana iguana (Common iguana).